The chain runs to 152 residues: uncharacterized protein (152 aa).

The interval 127–152 (EKEKAERKAEKAKKNKKKSSTKTKKK) is disordered. Residues 136–152 (EKAKKNKKKSSTKTKKK) are compositionally biased toward basic residues.

Belongs to the mimivirus R546 family.

This is an uncharacterized protein from Sputnik virophage.